The following is a 438-amino-acid chain: ATP-dependent RNA helicase SUB2 (438 aa).

Positions 1 to 19 (MSHEGEEDLLEYSDNEQEI) are enriched in acidic residues. A disordered region spans residues 1 to 44 (MSHEGEEDLLEYSDNEQEIQVDNTKATEVAGNGEEAADGKDGDK). The short motif at 54–82 (TGFKDFLLKPELSRAIIDCGFEHPSEVQQ) is the Q motif element. Residues 85–260 (IPQSIHGTDV…RRFLQNPLEI (176 aa)) enclose the Helicase ATP-binding domain. Residue 98 to 105 (AKSGLGKT) participates in ATP binding. Positions 207-210 (DECD) match the DECD box motif. Positions 272-433 (GLQQYYIRLE…EFPEEGVDPS (162 aa)) constitute a Helicase C-terminal domain.

It belongs to the DEAD box helicase family. DECD subfamily.

It localises to the nucleus. It carries out the reaction ATP + H2O = ADP + phosphate + H(+). ATP-binding RNA helicase involved in transcription elongation and required for the export of mRNA out of the nucleus. SUB2 also plays a role in pre-mRNA splicing and spliceosome assembly. May be involved in rDNA and telomeric silencing, and maintenance of genome integrity. This Eremothecium gossypii (strain ATCC 10895 / CBS 109.51 / FGSC 9923 / NRRL Y-1056) (Yeast) protein is ATP-dependent RNA helicase SUB2 (SUB2).